The chain runs to 385 residues: MATGDVKGCIRKLEQRLRTLNYPRDVDYSGLIKGDPSAFLPIISYTFTCYSTSIAEILISLGIELATKSDLRFIEAVYKVLRDVFNYKPILTKQQFLQCAFSERKIQIICDIVDCVVKKHKEITGQNKIKNQPVKKIVSAKDQCEVFYPEDMFVQLSVKTEMSTQKKPLVERHTGSEFQLQTKCYKSALLEEAEEEEPTSDCEEDSHLQREMGSPFETAEETPNSEQVELLRKQLAECQEKLQRLDCVEERLQSLETSVKGKIIIDETDWNNLLGRVLLLETERLLQSKKSDLPEFARISEHRTSSRMANEICSNLKTKADIPESHHQSSGYSSVLSADTSPIAIDINYSSLTEESKETTKQRMERITKMMEETSELLKFSNNTS.

Residues Arg11–Glu191 form a binds with microtubules and centrioles region. Positions Glu194–Glu204 are enriched in acidic residues. Residues Glu194–Asn224 are disordered. Coiled-coil stretches lie at residues Asn224–Ile263 and Thr353–Lys379.

As to quaternary structure, binds to centriolar microtubules.

The protein resides in the cytoplasm. The protein localises to the cytoskeleton. It is found in the microtubule organizing center. It localises to the centrosome. Its subcellular location is the centriole. The protein resides in the spindle pole. The protein localises to the midbody. Centriole-enriched microtubule-binding protein involved in centriole biogenesis. In collaboration with CEP295 and POC1B, is required for the centriole-to-centrosome conversion by ensuring the formation of bona fide centriole wall. Functions as a linker component that maintains centrosome cohesion. Associates with CROCC and regulates its stability and localization to the centrosome. In Xenopus tropicalis (Western clawed frog), this protein is Centrosomal protein of 44 kDa (cep44).